The sequence spans 554 residues: Hydroxylamine reductase (554 aa).

[2Fe-2S] cluster contacts are provided by Cys-3, Cys-6, Cys-18, and Cys-25. 8 residues coordinate hybrid [4Fe-2O-2S] cluster: His-252, Glu-276, Cys-320, Cys-408, Cys-436, Cys-461, Glu-495, and Lys-497. A Cysteine persulfide modification is found at Cys-408.

Belongs to the HCP family. [2Fe-2S] cluster is required as a cofactor. It depends on hybrid [4Fe-2O-2S] cluster as a cofactor.

It localises to the cytoplasm. The catalysed reaction is A + NH4(+) + H2O = hydroxylamine + AH2 + H(+). Catalyzes the reduction of hydroxylamine to form NH(3) and H(2)O. This Shewanella sp. (strain MR-7) protein is Hydroxylamine reductase.